The following is a 3655-amino-acid chain: NuA4 acetyltransferase complex subunit Tra2 (3655 aa).

Residues 8-2459 (SLSSSIELLK…REYHIRLLGK (2452 aa)) form an HEAT region. HEAT repeat units lie at residues 46 to 89 (QLYA…CAHR), 94 to 131 (QYAQSCVLSFISLIKADNEEVAVFCLKVIMDIFKTFKF), 149 to 188 (TNLPYLIPSIFVENPKSNEEENTTLAFGSYLSTETSIIQQ), 230 to 268 (PGVQAIIPCFLKMVQIDVPIDIASYAMIEKDSSIDFIEF), 300 to 338 (LSEKDIIPDIVIKLLRRCPFDMCFARKELLVATRHILST), 374 to 412 (STLADLLHHVRDELNETQIRKSIMIYSTNMHDLTLSIGL), 438 to 475 (FLLLSIFDSFVNKFSELNDSLDQFFKKKYEEEIKETKS), 606 to 643 (IFLKVFETNLPTFFDQLKKNLTLFHIPQFLLSNESTSS), 644 to 683 (KFLNILLRFLLSRIEELGSSDIRHGSVLLRLFRLSFVTVS), 735 to 772 (SLYKEVMPLLHALLEAFNSLLISARTPKEKDLFTELCL), 783 to 820 (PYMSYLMRPLVMSLKSSQELVSQGLRTFELCLDNLTPD), 828 to 867 (PYIEDLMNALWSHLQPLPYNYNHSHTALKILGKLGGRNRK), 1100 to 1141 (AFIL…QDHS), 1147 to 1184 (DRQVDILTALFFTLKDTTSEVPTVCKDHVMDVLKQLFR), 1193 to 1230 (EIAPGILGHLVLELSNHNSVVRSSTQKLLSLLSELSNT), 1429 to 1470 (RKLL…LFHL), 1665 to 1704 (NLVSDLTAHLVKKIEEPDLENNVKLILNLILSKDYGFLLK), 1709 to 1746 (GILLTYLNQNVSSLEKCNQIFSIFYEVFFQHPSTNVYA), 1753 to 1790 (IGALQIISFFLKNVPEITVQHQTEMLKMCSLFGNSEDV), 1808 to 1846 (QFPYELVNVVYMALLKSSPIEVRHLVKSSFDNIFSYIFS), 1891 to 1934 (EHRG…WNDL), 1973 to 2011 (SEAISLLERLLSSGTWASLGMKLSFFTKSITHFDATDAN), 2036 to 2073 (ENLSDLKFLLEKSLENESVGVQSAIGNFVSTILTLSNT), 2120 to 2157 (DALHTLLPGFMRCFHKVAKEFLSLGSQPSGNSLNLQIV), 2183 to 2221 (DQRRWFLSALVQIIEKSSSYEICNYLLEIVRGWIMNSPV), and 2401 to 2438 (DFVLPVLSLQFSNSKIAEYLWRDFFNASVCSFTKDEIP). Positions 2460 to 3655 (TPNVLETILT…QMDQLWQAWL (1196 aa)) are head. The FAT domain maps to 2484 to 3045 (LLVYLSKTYG…HFQLRTAYED (562 aa)). A disordered region spans residues 3059-3105 (RGNSRLRENDSSSDNKSKDLSPSGSFSSVSQFNSKNGSPSSIDSSEK). The segment covering 3063–3077 (RLRENDSSSDNKSKD) has biased composition (basic and acidic residues). A compositionally biased stretch (low complexity) spans 3078 to 3092 (LSPSGSFSSVSQFNS). The 341-residue stretch at 3285–3625 (VPNVDLVRGH…VISHNVPEDL (341 aa)) folds into the PI3K/PI4K catalytic domain. Positions 3291 to 3297 (VRGHTMC) are G-loop. Residues 3491–3499 (NIGGRSPQK) form a catalytic loop region. The interval 3511–3536 (SQDLLPSMTSNQPVFHNTEAVPFRLT) is activation loop. The 33-residue stretch at 3623–3655 (EDLPLNQTLVDLVSQATNPQQLAQMDQLWQAWL) folds into the FATC domain.

This sequence belongs to the PI3/PI4-kinase family. TRA1 subfamily. In terms of assembly, component of the NuA4 acetyltransferase complex. Tra1 is the scaffold subunit for binding to a variety of transcription activators or transcription factors to recruit NuA4 for targeted gene activation. Requires Hsp90 and its co-chaperone, the Triple-T complex (TTT), for its incorporation into NuA4. Interacts with tel2.

In terms of biological role, component of the NuA4 histone H4/H2A acetyltransferase involved in transcription and DNA repair. The polypeptide is NuA4 acetyltransferase complex subunit Tra2 (Schizosaccharomyces pombe (strain 972 / ATCC 24843) (Fission yeast)).